Reading from the N-terminus, the 140-residue chain is Large ribosomal subunit protein uL11 (140 aa).

This sequence belongs to the universal ribosomal protein uL11 family. In terms of assembly, part of the ribosomal stalk of the 50S ribosomal subunit. Interacts with L10 and the large rRNA to form the base of the stalk. L10 forms an elongated spine to which L12 dimers bind in a sequential fashion forming a multimeric L10(L12)X complex. In terms of processing, one or more lysine residues are methylated.

Forms part of the ribosomal stalk which helps the ribosome interact with GTP-bound translation factors. The chain is Large ribosomal subunit protein uL11 from Geotalea daltonii (strain DSM 22248 / JCM 15807 / FRC-32) (Geobacter daltonii).